We begin with the raw amino-acid sequence, 347 residues long: Phenylalanine--tRNA ligase alpha subunit (347 aa).

A disordered region spans residues 83-111 (QNLSGGDDSGADPTFDPTLPGTRPSLGHI). Mg(2+) is bound at residue E274.

It belongs to the class-II aminoacyl-tRNA synthetase family. Phe-tRNA synthetase alpha subunit type 1 subfamily. Tetramer of two alpha and two beta subunits. Mg(2+) serves as cofactor.

It localises to the cytoplasm. The enzyme catalyses tRNA(Phe) + L-phenylalanine + ATP = L-phenylalanyl-tRNA(Phe) + AMP + diphosphate + H(+). This Rhodopirellula baltica (strain DSM 10527 / NCIMB 13988 / SH1) protein is Phenylalanine--tRNA ligase alpha subunit.